We begin with the raw amino-acid sequence, 326 residues long: tRNA N6-adenosine threonylcarbamoyltransferase (326 aa).

2 residues coordinate Fe cation: His111 and His115. Substrate-binding positions include 134–138 (TVSGG), Asp167, Gly180, Asp184, and Asn268. Residue Asp293 participates in Fe cation binding.

It belongs to the KAE1 / TsaD family. Fe(2+) serves as cofactor.

The protein resides in the cytoplasm. The catalysed reaction is L-threonylcarbamoyladenylate + adenosine(37) in tRNA = N(6)-L-threonylcarbamoyladenosine(37) in tRNA + AMP + H(+). Required for the formation of a threonylcarbamoyl group on adenosine at position 37 (t(6)A37) in tRNAs that read codons beginning with adenine. Is involved in the transfer of the threonylcarbamoyl moiety of threonylcarbamoyl-AMP (TC-AMP) to the N6 group of A37, together with TsaE and TsaB. TsaD likely plays a direct catalytic role in this reaction. This Dehalococcoides mccartyi (strain ATCC BAA-2100 / JCM 16839 / KCTC 5957 / BAV1) protein is tRNA N6-adenosine threonylcarbamoyltransferase.